We begin with the raw amino-acid sequence, 722 residues long: Polyribonucleotide nucleotidyltransferase (722 aa).

The Mg(2+) site is built by Asp487 and Asp493. Residues 554 to 613 form the KH domain; the sequence is PRMVSFKIHPDKIREVIGKGGATIQALTKETGCSIDIKDDGTVTIASTSAEGMAEAKARI. The S1 motif domain maps to 623 to 691; it reads GKIYEGPVVK…ERGRLRLSLK (69 aa).

The protein belongs to the polyribonucleotide nucleotidyltransferase family. It depends on Mg(2+) as a cofactor.

It is found in the cytoplasm. It catalyses the reaction RNA(n+1) + phosphate = RNA(n) + a ribonucleoside 5'-diphosphate. Its function is as follows. Involved in mRNA degradation. Catalyzes the phosphorolysis of single-stranded polyribonucleotides processively in the 3'- to 5'-direction. The protein is Polyribonucleotide nucleotidyltransferase of Polynucleobacter asymbioticus (strain DSM 18221 / CIP 109841 / QLW-P1DMWA-1) (Polynucleobacter necessarius subsp. asymbioticus).